The following is a 150-amino-acid chain: Macrodomain Ter protein (150 aa).

Belongs to the MatP family. Homodimer.

The protein localises to the cytoplasm. In terms of biological role, required for spatial organization of the terminus region of the chromosome (Ter macrodomain) during the cell cycle. Prevents early segregation of duplicated Ter macrodomains during cell division. Binds specifically to matS, which is a 13 bp signature motif repeated within the Ter macrodomain. This chain is Macrodomain Ter protein, found in Escherichia coli O6:K15:H31 (strain 536 / UPEC).